Consider the following 208-residue polypeptide: 3-demethoxyubiquinol 3-hydroxylase (208 aa).

Residues glutamate 57, glutamate 87, histidine 90, glutamate 139, glutamate 171, and histidine 174 each coordinate Fe cation.

Belongs to the COQ7 family. Fe cation is required as a cofactor.

The protein localises to the cell membrane. The enzyme catalyses a 5-methoxy-2-methyl-3-(all-trans-polyprenyl)benzene-1,4-diol + AH2 + O2 = a 3-demethylubiquinol + A + H2O. Its pathway is cofactor biosynthesis; ubiquinone biosynthesis. Functionally, catalyzes the hydroxylation of 2-nonaprenyl-3-methyl-6-methoxy-1,4-benzoquinol during ubiquinone biosynthesis. The polypeptide is 3-demethoxyubiquinol 3-hydroxylase (Burkholderia mallei (strain NCTC 10229)).